The sequence spans 179 residues: Ribosome maturation factor RimM (179 aa).

One can recognise a PRC barrel domain in the interval 100–176 (KEEFHLLELI…FLIINPPNGL (77 aa)).

It belongs to the RimM family. As to quaternary structure, binds ribosomal protein uS19.

Its subcellular location is the cytoplasm. In terms of biological role, an accessory protein needed during the final step in the assembly of 30S ribosomal subunit, possibly for assembly of the head region. Essential for efficient processing of 16S rRNA. May be needed both before and after RbfA during the maturation of 16S rRNA. It has affinity for free ribosomal 30S subunits but not for 70S ribosomes. The sequence is that of Ribosome maturation factor RimM from Prochlorococcus marinus (strain AS9601).